Consider the following 211-residue polypeptide: Outer-membrane lipoprotein carrier protein (211 aa).

Positions 1–24 (MNTIKILIGLLGIFLFSLSGIVSA) are cleaved as a signal peptide.

This sequence belongs to the LolA family. In terms of assembly, monomer.

Its subcellular location is the periplasm. Participates in the translocation of lipoproteins from the inner membrane to the outer membrane. Only forms a complex with a lipoprotein if the residue after the N-terminal Cys is not an aspartate (The Asp acts as a targeting signal to indicate that the lipoprotein should stay in the inner membrane). The sequence is that of Outer-membrane lipoprotein carrier protein from Coxiella burnetii (strain CbuK_Q154) (Coxiella burnetii (strain Q154)).